Reading from the N-terminus, the 315-residue chain is Probable cytosolic iron-sulfur protein assembly protein CIAO1 homolog (315 aa).

WD repeat units lie at residues 11–50 (GHED…WVCK), 56–95 (GHQR…FESC), 100–139 (GHEN…EFEC), 145–188 (CHSQ…CTLD), 189–229 (KHAS…RSWE), 236–275 (RHPR…CSWR), and 283–315 (AHSQ…WQID).

This sequence belongs to the WD repeat CIA1 family.

Functionally, essential component of the cytosolic iron-sulfur (Fe/S) protein assembly machinery. Required for the maturation of extramitochondrial Fe/S proteins. The sequence is that of Probable cytosolic iron-sulfur protein assembly protein CIAO1 homolog from Ixodes scapularis (Black-legged tick).